A 135-amino-acid polypeptide reads, in one-letter code: Aspartate 1-decarboxylase (135 aa).

Residue Ser25 is the Schiff-base intermediate with substrate; via pyruvic acid of the active site. Ser25 carries the post-translational modification Pyruvic acid (Ser). Residue Thr57 participates in substrate binding. The Proton donor role is filled by Tyr58. 73–75 is a binding site for substrate; that stretch reads GAA.

It belongs to the PanD family. Heterooctamer of four alpha and four beta subunits. It depends on pyruvate as a cofactor. Post-translationally, is synthesized initially as an inactive proenzyme, which is activated by self-cleavage at a specific serine bond to produce a beta-subunit with a hydroxyl group at its C-terminus and an alpha-subunit with a pyruvoyl group at its N-terminus.

The protein localises to the cytoplasm. The enzyme catalyses L-aspartate + H(+) = beta-alanine + CO2. It participates in cofactor biosynthesis; (R)-pantothenate biosynthesis; beta-alanine from L-aspartate: step 1/1. Catalyzes the pyruvoyl-dependent decarboxylation of aspartate to produce beta-alanine. This chain is Aspartate 1-decarboxylase, found in Mycobacterium sp. (strain JLS).